The following is an 860-amino-acid chain: Protein argonaute-2 (860 aa).

The tract at residues 1–30 is disordered; the sequence is MYSGAGPALAPPAPPPPPIQGYAFKPPPRP. Tyr-2 bears the 3'-nitrotyrosine mark. The segment covering 9 to 30 has biased composition (pro residues); it reads LAPPAPPPPPIQGYAFKPPPRP. The region spanning 230-349 is the PAZ domain; sequence PVIEFVCEVL…LPLEVCNIVA (120 aa). An interaction with guide RNA region spans residues 312-317; it reads YFKDRH. Ser-388 carries the phosphoserine modification. In terms of domain architecture, Piwi spans 518–819; that stretch reads LVVVILPGKT…VAFRARYHLV (302 aa). Residues 525–567 are interaction with guide RNA; the sequence is GKTPVYAEVKRVGDTVLGMATQCVQMKNVQRTTPQTLSNLWLK. The segment at 588–591 is interaction with GW182 family members; it reads FQQP. Asp-598 is a binding site for a divalent metal cation. The interval 651-661 is interaction with GW182 family members; the sequence is LIQFYKSTRFK. Asp-670 is an a divalent metal cation binding site. Pro-701 is modified (4-hydroxyproline). Interaction with guide RNA regions lie at residues 710 to 711, 754 to 762, and 791 to 813; these read KR, HAGIQGTSR, and YVRCTRSVSIPAPAYYAHLVAFR. A divalent metal cation is bound at residue His-808. Phosphoserine is present on residues Ser-825, Ser-829, Ser-832, and Ser-835.

The protein belongs to the argonaute family. Ago subfamily. As to quaternary structure, interacts with DICER1 through its Piwi domain and with TARBP2 during assembly of the RNA-induced silencing complex (RISC). Together, DICER1, AGO2 and TARBP2 constitute the trimeric RISC loading complex (RLC), or micro-RNA (miRNA) loading complex (miRLC). Within the RLC/miRLC, DICER1 and TARBP2 are required to process precursor miRNAs (pre-miRNAs) to mature miRNAs and then load them onto AGO2. AGO2 bound to the mature miRNA constitutes the minimal RISC and may subsequently dissociate from DICER1 and TARBP2. Note however that the term RISC has also been used to describe the trimeric RLC/miRLC. The formation of RISC complexes containing siRNAs rather than miRNAs appears to occur independently of DICER1. Interacts with AGO1. Also interacts with DDB1, DDX5, DDX6, DDX20, DHX30, DHX36, DDX47, DHX9, ELAVL, FXR1, GEMIN4, HNRNPF, IGF2BP1, ILF3, IMP8, MATR3, PABPC1, PRMT5, P4HA1, P4HB, RBM4, SART3, TNRC6A, TNRC6B, UPF1 and YBX1. Interacts with the P-body components DCP1A and XRN1. Associates with polysomes and messenger ribonucleoproteins (mNRPs). Interacts with RBM4; the interaction is modulated under stress-induced conditions, occurs under both cell proliferation and differentiation conditions and in an RNA- and phosphorylation-independent manner. Interacts with LIMD1, WTIP and AJUBA. Interacts with TRIM71; the interaction increases in presence of RNA. Interacts with APOBEC3G in an RNA-dependent manner. Interacts with APOBEC3A, APOBEC3C, APOBEC3F and APOBEC3H. Interacts with DICER1, TARBP2, EIF6, MOV10 and RPL7A (60S ribosome subunit); they form a large RNA-induced silencing complex (RISC). Interacts with FMR1. Interacts with ZFP36. Interacts with RC3H1; the interaction is RNA independent. Found in a complex composed of AGO2, CHD7 and ARB2A. Interacts with SND1 and SYT11. Interacts with CLNK. Interacts with GARRE1. Interacts with GRB2; this interaction is important for the formation of a ternary complex containing GRB2, AGO2 and DICER1. It depends on Mg(2+) as a cofactor. Requires Mn(2+) as cofactor. In terms of processing, hydroxylated. 4-hydroxylation appears to enhance protein stability but is not required for miRNA-binding or endonuclease activity. Ubiquitinated on surface-exposed lysines by a SCF-like E3 ubiquitin-protein ligase complex containing ZSWIM8 during target-directed microRNA degradation (TDMD), a process that mediates degradation of microRNAs (miRNAs). Ubiquitination by the SCF-like E3 ubiquitin-protein ligase complex containing ZSWIM8 leads to its subsequent degradation, thereby exposing miRNAs for degradation. ZSWIM8 recognizes and binds AGO2 when it is engaged with a TDMD target. Post-translationally, phosphorylation at Ser-388 by AKT3; leads to up-regulate translational repression of microRNA target and down-regulate endonucleolytic cleavage. In terms of processing, a phosphorylation cycle of C-terminal serine cluster (Ser-825-Ser-835) regulates the release of target mRNAs. Target-binding leads to phosphorylation of these residues by CSNK1A1, which reduces the affinity of AGO2 for mRNA and enables target release. The ANKRD52-PPP6C phosphatase complex dephosphorylates the residues, which primes AGO2 for binding a new target.

It localises to the cytoplasm. It is found in the P-body. Its subcellular location is the nucleus. The enzyme catalyses Endonucleolytic cleavage to 5'-phosphomonoester.. Required for RNA-mediated gene silencing (RNAi) by the RNA-induced silencing complex (RISC). The 'minimal RISC' appears to include AGO2 bound to a short guide RNA such as a microRNA (miRNA) or short interfering RNA (siRNA). These guide RNAs direct RISC to complementary mRNAs that are targets for RISC-mediated gene silencing. The precise mechanism of gene silencing depends on the degree of complementarity between the miRNA or siRNA and its target. Binding of RISC to a perfectly complementary mRNA generally results in silencing due to endonucleolytic cleavage of the mRNA specifically by AGO2. Binding of RISC to a partially complementary mRNA results in silencing through inhibition of translation, and this is independent of endonuclease activity. May inhibit translation initiation by binding to the 7-methylguanosine cap, thereby preventing the recruitment of the translation initiation factor eIF4-E. May also inhibit translation initiation via interaction with EIF6, which itself binds to the 60S ribosomal subunit and prevents its association with the 40S ribosomal subunit. The inhibition of translational initiation leads to the accumulation of the affected mRNA in cytoplasmic processing bodies (P-bodies), where mRNA degradation may subsequently occur. In some cases RISC-mediated translational repression is also observed for miRNAs that perfectly match the 3' untranslated region (3'-UTR). Can also up-regulate the translation of specific mRNAs under certain growth conditions. Binds to the AU element of the 3'-UTR of the TNF (TNF-alpha) mRNA and up-regulates translation under conditions of serum starvation. Also required for transcriptional gene silencing (TGS), in which short RNAs known as antigene RNAs or agRNAs direct the transcriptional repression of complementary promoter regions. The sequence is that of Protein argonaute-2 (AGO2) from Bos taurus (Bovine).